Consider the following 260-residue polypeptide: Ubiquinone/menaquinone biosynthesis C-methyltransferase UbiE (260 aa).

S-adenosyl-L-methionine contacts are provided by residues T83, D104, 132–133 (NA), and S149.

It belongs to the class I-like SAM-binding methyltransferase superfamily. MenG/UbiE family.

The enzyme catalyses a 2-demethylmenaquinol + S-adenosyl-L-methionine = a menaquinol + S-adenosyl-L-homocysteine + H(+). It carries out the reaction a 2-methoxy-6-(all-trans-polyprenyl)benzene-1,4-diol + S-adenosyl-L-methionine = a 5-methoxy-2-methyl-3-(all-trans-polyprenyl)benzene-1,4-diol + S-adenosyl-L-homocysteine + H(+). The protein operates within quinol/quinone metabolism; menaquinone biosynthesis; menaquinol from 1,4-dihydroxy-2-naphthoate: step 2/2. Its pathway is cofactor biosynthesis; ubiquinone biosynthesis. Its function is as follows. Methyltransferase required for the conversion of demethylmenaquinol (DMKH2) to menaquinol (MKH2) and the conversion of 2-polyprenyl-6-methoxy-1,4-benzoquinol (DDMQH2) to 2-polyprenyl-3-methyl-6-methoxy-1,4-benzoquinol (DMQH2). This chain is Ubiquinone/menaquinone biosynthesis C-methyltransferase UbiE, found in Vibrio cholerae serotype O1 (strain ATCC 39315 / El Tor Inaba N16961).